The primary structure comprises 352 residues: Histidine biosynthesis bifunctional protein HisB (352 aa).

The histidinol-phosphatase stretch occupies residues 1–163 (MKKILFIDRD…MVASAIINDA (163 aa)). D8 functions as the Nucleophile in the catalytic mechanism. 2 residues coordinate Mg(2+): D8 and D10. Catalysis depends on D10, which acts as the Proton donor. Positions 91, 93, 99, and 101 each coordinate Zn(2+). D128 serves as a coordination point for Mg(2+). An imidazoleglycerol-phosphate dehydratase region spans residues 164 to 352 (RKASVQRKTK…NYLPSTKGVL (189 aa)).

It in the N-terminal section; belongs to the histidinol-phosphatase family. This sequence in the C-terminal section; belongs to the imidazoleglycerol-phosphate dehydratase family. Mg(2+) serves as cofactor. The cofactor is Zn(2+).

Its subcellular location is the cytoplasm. The catalysed reaction is D-erythro-1-(imidazol-4-yl)glycerol 3-phosphate = 3-(imidazol-4-yl)-2-oxopropyl phosphate + H2O. The enzyme catalyses L-histidinol phosphate + H2O = L-histidinol + phosphate. The protein operates within amino-acid biosynthesis; L-histidine biosynthesis; L-histidine from 5-phospho-alpha-D-ribose 1-diphosphate: step 6/9. It functions in the pathway amino-acid biosynthesis; L-histidine biosynthesis; L-histidine from 5-phospho-alpha-D-ribose 1-diphosphate: step 8/9. The protein is Histidine biosynthesis bifunctional protein HisB of Legionella pneumophila (strain Lens).